A 250-amino-acid polypeptide reads, in one-letter code: Ubiquinone/menaquinone biosynthesis C-methyltransferase UbiE (250 aa).

S-adenosyl-L-methionine contacts are provided by residues Thr-74, Asp-94, 122–123 (DA), and Ser-139.

It belongs to the class I-like SAM-binding methyltransferase superfamily. MenG/UbiE family.

It catalyses the reaction a 2-demethylmenaquinol + S-adenosyl-L-methionine = a menaquinol + S-adenosyl-L-homocysteine + H(+). The enzyme catalyses a 2-methoxy-6-(all-trans-polyprenyl)benzene-1,4-diol + S-adenosyl-L-methionine = a 5-methoxy-2-methyl-3-(all-trans-polyprenyl)benzene-1,4-diol + S-adenosyl-L-homocysteine + H(+). Its pathway is quinol/quinone metabolism; menaquinone biosynthesis; menaquinol from 1,4-dihydroxy-2-naphthoate: step 2/2. It participates in cofactor biosynthesis; ubiquinone biosynthesis. In terms of biological role, methyltransferase required for the conversion of demethylmenaquinol (DMKH2) to menaquinol (MKH2) and the conversion of 2-polyprenyl-6-methoxy-1,4-benzoquinol (DDMQH2) to 2-polyprenyl-3-methyl-6-methoxy-1,4-benzoquinol (DMQH2). The protein is Ubiquinone/menaquinone biosynthesis C-methyltransferase UbiE of Cereibacter sphaeroides (strain ATCC 17029 / ATH 2.4.9) (Rhodobacter sphaeroides).